We begin with the raw amino-acid sequence, 159 residues long: Small ribosomal subunit protein uS17 (159 aa).

This sequence belongs to the universal ribosomal protein uS17 family.

This chain is Small ribosomal subunit protein uS17 (RPS11), found in Euphorbia esula (Leafy spurge).